Here is a 330-residue protein sequence, read N- to C-terminus: DNA-directed RNA polymerase subunit alpha (330 aa).

The interval 1-236 (MQNSVIEFLK…EQLEAFIDLR (236 aa)) is alpha N-terminal domain (alpha-NTD). The tract at residues 250–330 (FDPILLRLVD…NWPPTNILDN (81 aa)) is alpha C-terminal domain (alpha-CTD).

This sequence belongs to the RNA polymerase alpha chain family. As to quaternary structure, homodimer. The RNAP catalytic core consists of 2 alpha, 1 beta, 1 beta' and 1 omega subunit. When a sigma factor is associated with the core the holoenzyme is formed, which can initiate transcription.

The catalysed reaction is RNA(n) + a ribonucleoside 5'-triphosphate = RNA(n+1) + diphosphate. Functionally, DNA-dependent RNA polymerase catalyzes the transcription of DNA into RNA using the four ribonucleoside triphosphates as substrates. This Blochmanniella pennsylvanica (strain BPEN) protein is DNA-directed RNA polymerase subunit alpha.